A 158-amino-acid polypeptide reads, in one-letter code: Biotin carboxyl carrier protein of acetyl-CoA carboxylase (158 aa).

Positions 81 to 157 (YATIVSPMVG…DCGQALMKVE (77 aa)) constitute a Biotinyl-binding domain. An N6-biotinyllysine modification is found at K123.

It localises to the plastid. The protein resides in the chloroplast. It functions in the pathway lipid metabolism; fatty acid biosynthesis. In terms of biological role, this protein is a component of the acetyl coenzyme A carboxylase complex; first, biotin carboxylase catalyzes the carboxylation of the carrier protein and then the transcarboxylase transfers the carboxyl group to form malonyl-CoA. This chain is Biotin carboxyl carrier protein of acetyl-CoA carboxylase (accB), found in Pyropia yezoensis (Susabi-nori).